Consider the following 194-residue polypeptide: Probable GTP-binding protein EngB (194 aa).

An EngB-type G domain is found at 22-194; it reads GKPEIALVGR…EVWHWIEQHI (173 aa). Residues 30–37, 57–61, 75–78, 142–145, and 175–177 each bind GTP; these read GRSNVGKS, GKTQT, DVPG, TKSD, and FSS. Mg(2+)-binding residues include serine 37 and threonine 59.

It belongs to the TRAFAC class TrmE-Era-EngA-EngB-Septin-like GTPase superfamily. EngB GTPase family. Mg(2+) serves as cofactor.

Necessary for normal cell division and for the maintenance of normal septation. The protein is Probable GTP-binding protein EngB of Leuconostoc mesenteroides subsp. mesenteroides (strain ATCC 8293 / DSM 20343 / BCRC 11652 / CCM 1803 / JCM 6124 / NCDO 523 / NBRC 100496 / NCIMB 8023 / NCTC 12954 / NRRL B-1118 / 37Y).